The chain runs to 60 residues: Protein translocase subunit SecE (60 aa).

A helical transmembrane segment spans residues 31–51; it reads VIVVSTVIFFLVFFYALDLGI.

Belongs to the SecE/SEC61-gamma family. As to quaternary structure, component of the Sec protein translocase complex. Heterotrimer consisting of SecY, SecE and SecG subunits. The heterotrimers can form oligomers, although 1 heterotrimer is thought to be able to translocate proteins. Interacts with the ribosome. Interacts with SecDF, and other proteins may be involved. Interacts with SecA.

Its subcellular location is the cell membrane. In terms of biological role, essential subunit of the Sec protein translocation channel SecYEG. Clamps together the 2 halves of SecY. May contact the channel plug during translocation. This Staphylococcus aureus (strain Mu50 / ATCC 700699) protein is Protein translocase subunit SecE.